Reading from the N-terminus, the 447-residue chain is Chitobiosyldiphosphodolichol beta-mannosyltransferase (447 aa).

The Cytoplasmic portion of the chain corresponds to 1 to 2 (MT). Residues 3–23 (LVLLLSIFAICFSSVAFIQLL) traverse the membrane as a helical; Signal-anchor for type II membrane protein segment. The Lumenal portion of the chain corresponds to 24-447 (PTRREKKSSE…IAGTFLGLVT (424 aa)).

This sequence belongs to the glycosyltransferase group 1 family. Glycosyltransferase 33 subfamily.

The protein resides in the endoplasmic reticulum membrane. It catalyses the reaction an N,N'-diacetylchitobiosyl-diphospho-di-trans,poly-cis-dolichol + GDP-alpha-D-mannose = a beta-D-Man-(1-&gt;4)-beta-D-GlcNAc-(1-&gt;4)-alpha-D-GlcNAc-diphospho-di-trans,poly-cis-dolichol + GDP + H(+). The protein operates within protein modification; protein glycosylation. Its function is as follows. Participates in the formation of the lipid-linked precursor oligosaccharide for N-glycosylation. Involved in assembling the dolichol-pyrophosphate-GlcNAc(2)-Man(5) intermediate on the cytoplasmic surface of the ER. The polypeptide is Chitobiosyldiphosphodolichol beta-mannosyltransferase (Arthroderma benhamiae (strain ATCC MYA-4681 / CBS 112371) (Trichophyton mentagrophytes)).